A 285-amino-acid polypeptide reads, in one-letter code: MTKEMQTLALAPVGNLESYIRAANTWPMLTAEEEKELAEKLHYQGDLEAAKTLILSHLRFVVHVARNYAGYGLPQADLIQEGNIGLMKAVRRFNPEVGVRLVSFAVHWIKAEIHEYVLRNWRIVKVATTKAQRKLFFNLRKTKQRLGWFNQDEVEMVARELGVSSKDVREMESRMAAQDMTFDMSADDDASDSQPMAPVLYLQDKTSNFADGIEEDNWEDQAANKLTFAMEGLDERSQDIIRARWLDEDNKSTLQELADRYGVSAERVRQLEKNAMKKLRAAIEA.

A sigma-70 factor domain-2 region spans residues 53 to 122; that stretch reads LILSHLRFVV…IHEYVLRNWR (70 aa). The Interaction with polymerase core subunit RpoC signature appears at 77-80; that stretch reads DLIQ. Residues 229-281 form a sigma-70 factor domain-4 region; that stretch reads AMEGLDERSQDIIRARWLDEDNKSTLQELADRYGVSAERVRQLEKNAMKKLRA. The segment at residues 254–273 is a DNA-binding region (H-T-H motif); the sequence is LQELADRYGVSAERVRQLEK.

This sequence belongs to the sigma-70 factor family. RpoH subfamily. Interacts with the RNA polymerase core enzyme.

It is found in the cytoplasm. Sigma factors are initiation factors that promote the attachment of RNA polymerase to specific initiation sites and are then released. This sigma factor is involved in regulation of expression of heat shock genes. This chain is RNA polymerase sigma factor RpoH, found in Enterobacter cloacae.